We begin with the raw amino-acid sequence, 59 residues long: MKVFSAVLIILFVCSMIIGINAVRIPVSCKHSGQCLKPCKDAGMRFGKCMNGKCDCTPK.

Positions 1-22 (MKVFSAVLIILFVCSMIIGINA) are cleaved as a signal peptide. Intrachain disulfides connect Cys-29–Cys-49, Cys-35–Cys-54, and Cys-39–Cys-56. The interaction with Ca(2+)-activated K(+) channels stretch occupies residues 47-54 (GKCMNGKC).

The protein belongs to the short scorpion toxin superfamily. Potassium channel inhibitor family. Alpha-KTx 03 subfamily. Expressed by the venom gland.

The protein localises to the secreted. Has also been shown to inhibit with high potency Kv1.3/KCNA3 and with low potency Kv1.1/KCNA1 and Kv1.2/KCNA2 voltage-gated potassium channels. Also binds and inhibits the molluscan calcium-activated potassium channels KCa (Kd=135 nM). The protein is Potassium channel toxin alpha-KTx 3.5 (KTX2) of Androctonus australis (Sahara scorpion).